Reading from the N-terminus, the 862-residue chain is Protein translocase subunit SecA (862 aa).

ATP is bound by residues glutamine 86, 104–108, and aspartate 499; that span reads GEGKT. The Zn(2+) site is built by cysteine 848, cysteine 850, cysteine 859, and histidine 860.

Belongs to the SecA family. Monomer and homodimer. Part of the essential Sec protein translocation apparatus which comprises SecA, SecYEG and auxiliary proteins SecDF-YajC and YidC. Requires Zn(2+) as cofactor.

It is found in the cell inner membrane. The protein resides in the cytoplasm. It catalyses the reaction ATP + H2O + cellular proteinSide 1 = ADP + phosphate + cellular proteinSide 2.. Part of the Sec protein translocase complex. Interacts with the SecYEG preprotein conducting channel. Has a central role in coupling the hydrolysis of ATP to the transfer of proteins into and across the cell membrane, serving both as a receptor for the preprotein-SecB complex and as an ATP-driven molecular motor driving the stepwise translocation of polypeptide chains across the membrane. The chain is Protein translocase subunit SecA from Ehrlichia canis (strain Jake).